The following is a 223-amino-acid chain: Putative C-type lectin protein 51 (223 aa).

An N-terminal signal peptide occupies residues 1–31 (MAKRINFTSCLIFTSCFTAFIVSLCLLVSSC). Residues 111–218 (QEGRCYHYSR…CDTPRRCLCG (108 aa)) enclose the C-type lectin domain. Cysteine 193 and cysteine 209 are joined by a disulfide.

This chain is Putative C-type lectin protein 51 (51), found in Equine herpesvirus 2 (strain 86/87) (EHV-2).